Here is a 158-residue protein sequence, read N- to C-terminus: Dysbindin domain-containing protein 1 (158 aa).

Residues M1 to M38 form a disordered region. A phosphoserine mark is found at S95 and S119. Residues D96–D158 form a disordered region. Positions T125–R141 are enriched in basic and acidic residues.

The protein belongs to the dysbindin family.

The sequence is that of Dysbindin domain-containing protein 1 (DBNDD1) from Bos taurus (Bovine).